The primary structure comprises 262 residues: Catechol O-methyltransferase domain-containing protein 1 (262 aa).

The helical; Signal-anchor for type II membrane protein transmembrane segment at 12–32 (AALALGSAALGAAFATGLFLG) threads the bilayer. S-adenosyl-L-methionine contacts are provided by residues Asp108, 110 to 111 (GT), Ser116, Glu134, Val135, Ala163, Asp185, Asp187, and Tyr194.

The protein belongs to the class I-like SAM-binding methyltransferase superfamily. Cation-dependent O-methyltransferase family. In terms of assembly, homodimer.

It is found in the membrane. Functionally, putative O-methyltransferase. The protein is Catechol O-methyltransferase domain-containing protein 1 (COMTD1) of Homo sapiens (Human).